We begin with the raw amino-acid sequence, 354 residues long: Hyaluronan and proteoglycan link protein 1 (354 aa).

Positions 1–9 (MRSLLFLVL) are excised as a propeptide. In terms of domain architecture, Ig-like V-type spans 38-152 (PRLLVEAEQA…EGLEDDTAVV (115 aa)). Residue asparagine 56 is glycosylated (N-linked (GlcNAc...) asparagine). 5 disulfide bridges follow: cysteine 61–cysteine 139, cysteine 181–cysteine 252, cysteine 205–cysteine 226, cysteine 279–cysteine 349, and cysteine 304–cysteine 325. 2 consecutive Link domains span residues 159 to 254 (VVFP…FCFT) and 259 to 351 (GRFY…YCFR).

It belongs to the HAPLN family.

Its subcellular location is the secreted. It localises to the extracellular space. It is found in the extracellular matrix. In terms of biological role, stabilizes the aggregates of proteoglycan monomers with hyaluronic acid in the extracellular cartilage matrix. The sequence is that of Hyaluronan and proteoglycan link protein 1 (Hapln1) from Rattus norvegicus (Rat).